The primary structure comprises 485 residues: Hydrogenase transcriptional regulatory protein HoxA (485 aa).

The 115-residue stretch at 6 to 120 folds into the Response regulatory domain; the sequence is TILVVDDEVR…QLVETVKEAV (115 aa). Asp54 carries the 4-aspartylphosphate modification. Residues 166–392 enclose the Sigma-54 factor interaction domain; it reads STESPMHAVI…ELQNEIQRMA (227 aa). ATP contacts are provided by residues 192-199 and 264-273; these read GESGTGKE and EIGETSPAFQ. Residues 404–426 are disordered; that stretch reads PLLGRRNGKRSAPLPAHGRLNGS. Positions 451 to 470 form a DNA-binding region, H-T-H motif; that stretch reads NISRVASELGLSRVGLRNKL.

The protein localises to the cytoplasm. Probable member of the two-component regulatory system involved in the regulation of the hydrogenase activity. HoxA is probably phosphorylated by a sensory component (which could be HoxX) and then acts in conjunction with sigma-54 as a transcriptional activator. The polypeptide is Hydrogenase transcriptional regulatory protein HoxA (hoxA) (Bradyrhizobium diazoefficiens (strain JCM 10833 / BCRC 13528 / IAM 13628 / NBRC 14792 / USDA 110)).